Reading from the N-terminus, the 634-residue chain is tRNA uridine 5-carboxymethylaminomethyl modification enzyme MnmG (634 aa).

Position 14 to 19 (14 to 19 (GGGHAG)) interacts with FAD. 279-293 (GPRYCPSIEDKVVRF) lines the NAD(+) pocket.

It belongs to the MnmG family. In terms of assembly, homodimer. Heterotetramer of two MnmE and two MnmG subunits. FAD serves as cofactor.

The protein resides in the cytoplasm. Its function is as follows. NAD-binding protein involved in the addition of a carboxymethylaminomethyl (cmnm) group at the wobble position (U34) of certain tRNAs, forming tRNA-cmnm(5)s(2)U34. In Xanthomonas axonopodis pv. citri (strain 306), this protein is tRNA uridine 5-carboxymethylaminomethyl modification enzyme MnmG.